Here is a 537-residue protein sequence, read N- to C-terminus: DNA-directed primase/polymerase protein (537 aa).

Residues 1–22 are a coiled coil; sequence MLRKWEARVKQIEERASHYERK. Residues R76, 114–116, 165–169, 270–273, and K279 contribute to the substrate site; these read DLE, KFSRH, and RNFR. 2 residues coordinate Mn(2+): D114 and E116. C401, H408, C428, and C433 together coordinate Zn(2+). The Zinc knuckle motif signature appears at 401–434; that stretch reads CENIGRAHKSNNIMILVDLKNEVWYQKCHDPVCK. The disordered stretch occupies residues 462–481; the sequence is SGETDDTSTSLTKDSQTPPS. Residues 462-536 are interaction with RPA1; that stretch reads SGETDDTSTS…DELIIEALQN (75 aa). Positions 468-478 are enriched in low complexity; that stretch reads TSTSLTKDSQT. Short sequence motifs (RPA1-binding motif) lie at residues 494–507 and 524–532; these read WDDE…EATE and DIPDELIIE.

This sequence belongs to the eukaryotic-type primase small subunit family. Interacts with RPA1; leading to recruitment to chromatin and stimulate DNA primase activity. Interacts with SSBP1. Interacts with POLDIP2; leading to enhance DNA polymerase activity. Mn(2+) is required as a cofactor.

Its subcellular location is the nucleus. It localises to the mitochondrion matrix. The protein localises to the chromosome. The catalysed reaction is ssDNA + n NTP = ssDNA/pppN(pN)n-1 hybrid + (n-1) diphosphate.. The enzyme catalyses DNA(n) + a 2'-deoxyribonucleoside 5'-triphosphate = DNA(n+1) + diphosphate. Functionally, DNA primase and DNA polymerase required to tolerate replication-stalling lesions by bypassing them. Required to facilitate mitochondrial and nuclear replication fork progression by initiating de novo DNA synthesis using dNTPs and acting as an error-prone DNA polymerase able to bypass certain DNA lesions. Shows a high capacity to tolerate DNA damage lesions such as 8oxoG and abasic sites in DNA. Provides different translesion synthesis alternatives when DNA replication is stalled: able to synthesize DNA primers downstream of lesions, such as ultraviolet (UV) lesions, R-loops and G-quadruplexes, to allow DNA replication to continue. Can also realign primers ahead of 'unreadable lesions' such as abasic sites and 6-4 photoproduct (6-4 pyrimidine-pyrimidinone), thereby skipping the lesion. Repriming avoids fork degradation while leading to accumulation of internal ssDNA gaps behind the forks. Also able to incorporate nucleotides opposite DNA lesions such as 8oxoG, like a regular translesion synthesis DNA polymerase. Also required for reinitiating stalled forks after UV damage during nuclear DNA replication. Required for mitochondrial DNA (mtDNA) synthesis and replication, by reinitiating synthesis after UV damage or in the presence of chain-terminating nucleotides. Prevents APOBEC family-mediated DNA mutagenesis by repriming downstream of abasic site to prohibit error-prone translesion synthesis. Has non-overlapping function with POLH. In addition to its role in DNA damage response, also required to maintain efficient nuclear and mitochondrial DNA replication in unperturbed cells. This is DNA-directed primase/polymerase protein from Mus musculus (Mouse).